A 502-amino-acid chain; its full sequence is MFHQAKWDEPTIFELSRPGRIGYTLPKPIEDVDVDIPEKLRRKSPLNLPELSEPEVVKHYTRLSEMNYGVDSGIYPLGSCTMKYNPKINEEIASHPGVAYVHPYQDEGTVQGALKIMWELEQWLKEITGMDRFTLQPAAGANGEFTGVSIIRAYHIDRGETQRTEMLVPDSAHGTNPASAAMAGFKVIEIPSNENGTVDLEALENAVSERTAGLMLTNPNTLGIFEDEILEIAKIVHKAGGLLYYDGANLNAVLGKIRPGDMGFDVVHLNLHKTFSTPHGGGGPGSGPVGVKDFLKDYLPVPLVSYDAENDRYYLDYNVPRSIGKVKELYGNFAVIVRALTYLKIMGREGLKEVSEVAVLNANYLTQKLKGTRGYELPGKELRKHETVFSAEPMKKETGVKALDVAKRLLDFCMHAPTIYFPLIVHEALMIEPTETVSKEELDAYVEALKRISEEAYSNPEVVTSAPHNTAVRRVDDVLAAKKPVITWRMYRELKERGEIDY.

Lys-273 is modified (N6-(pyridoxal phosphate)lysine).

Belongs to the GcvP family. C-terminal subunit subfamily. In terms of assembly, the glycine cleavage system is composed of four proteins: P, T, L and H. In this organism, the P 'protein' is a heterodimer of two subunits. Pyridoxal 5'-phosphate is required as a cofactor.

The enzyme catalyses N(6)-[(R)-lipoyl]-L-lysyl-[glycine-cleavage complex H protein] + glycine + H(+) = N(6)-[(R)-S(8)-aminomethyldihydrolipoyl]-L-lysyl-[glycine-cleavage complex H protein] + CO2. The glycine cleavage system catalyzes the degradation of glycine. The P protein binds the alpha-amino group of glycine through its pyridoxal phosphate cofactor; CO(2) is released and the remaining methylamine moiety is then transferred to the lipoamide cofactor of the H protein. This chain is Probable glycine dehydrogenase (decarboxylating) subunit 2, found in Thermococcus kodakarensis (strain ATCC BAA-918 / JCM 12380 / KOD1) (Pyrococcus kodakaraensis (strain KOD1)).